A 76-amino-acid polypeptide reads, in one-letter code: RNA-binding protein KhpA (76 aa).

Residues 29 to 76 (SLTYKLSVSKEDMGRVIGKQGRIAKAIRTLVYAVGSKNDKKIRLEIIE) enclose the KH domain.

Belongs to the KhpA RNA-binding protein family. Forms a complex with KhpB.

The protein localises to the cytoplasm. Functionally, a probable RNA chaperone. Forms a complex with KhpB which binds to cellular RNA and controls its expression. Plays a role in peptidoglycan (PG) homeostasis and cell length regulation. The polypeptide is RNA-binding protein KhpA (Listeria innocua serovar 6a (strain ATCC BAA-680 / CLIP 11262)).